We begin with the raw amino-acid sequence, 279 residues long: Oxygen-dependent coproporphyrinogen-III oxidase (279 aa).

Serine 102 is a substrate binding site. A divalent metal cation contacts are provided by histidine 106 and histidine 116. Histidine 116 functions as the Proton donor in the catalytic mechanism. Residue 118–120 (NTR) coordinates substrate. A divalent metal cation is bound by residues histidine 149 and histidine 179. Residues 244–279 (YVEFNLLYDRGTKFGLMTDGNVEAILMSLPPEVKFN) form an important for dimerization region.

It belongs to the aerobic coproporphyrinogen-III oxidase family. As to quaternary structure, homodimer. The cofactor is a divalent metal cation.

It localises to the cytoplasm. It carries out the reaction coproporphyrinogen III + O2 + 2 H(+) = protoporphyrinogen IX + 2 CO2 + 2 H2O. It participates in porphyrin-containing compound metabolism; protoporphyrin-IX biosynthesis; protoporphyrinogen-IX from coproporphyrinogen-III (O2 route): step 1/1. Functionally, involved in the heme biosynthesis. Catalyzes the aerobic oxidative decarboxylation of propionate groups of rings A and B of coproporphyrinogen-III to yield the vinyl groups in protoporphyrinogen-IX. In Rickettsia akari (strain Hartford), this protein is Oxygen-dependent coproporphyrinogen-III oxidase.